Reading from the N-terminus, the 76-residue chain is Sec-independent protein translocase protein TatA (76 aa).

Residues 1 to 21 (MLGGLTGWHLLIILAVILLLF) traverse the membrane as a helical segment. Positions 44–57 (VNEMKKDGDKDKGE) are enriched in basic and acidic residues. The disordered stretch occupies residues 44 to 76 (VNEMKKDGDKDKGEGGSTAPATDTGASSEQNSK). Residues 62–76 (APATDTGASSEQNSK) are compositionally biased toward polar residues.

It belongs to the TatA/E family. In terms of assembly, the Tat system comprises two distinct complexes: a TatABC complex, containing multiple copies of TatA, TatB and TatC subunits, and a separate TatA complex, containing only TatA subunits. Substrates initially bind to the TatABC complex, which probably triggers association of the separate TatA complex to form the active translocon.

It localises to the cell membrane. Functionally, part of the twin-arginine translocation (Tat) system that transports large folded proteins containing a characteristic twin-arginine motif in their signal peptide across membranes. TatA could form the protein-conducting channel of the Tat system. The chain is Sec-independent protein translocase protein TatA from Leifsonia xyli subsp. xyli (strain CTCB07).